Here is a 520-residue protein sequence, read N- to C-terminus: MSESGHSQPGLYGIERRRRWKEPGSGGPQNLSGPGGRERDYIAPWERERRDASEETSTSVMQKTPIILSKPPAERSKQPPPPTAPAAPPAPAPLEKPIVLMKPREEGKGPVAVTGASTPEGTAPPPPAAPAPPKGEKEGQRPTQPVYQIQNRGMGTAAPAAMDPVVGQAKLLPPERMKHSIKLVDDQMNWCDSAIEYLLDQTDVLVVGVLGLQGTGKSMVMSLLSANTPEEDQRTYVFRAQSAEMKERGGNQTSGIDFFITQERIVFLDTQPILSPSILDHLINNDRKLPPEYNLPHTYVEMQSLQIAAFLFTVCHVVIVVQDWFTDLSLYRFLQTAEMVKPSTPSPSHESSSSSGSDEGTEYYPHLVFLQNKARREDFCPRKLRQMHLMIDQLMAHSHLRYKGTLSMLQCNVFPGLPPDFLDSEVNLFLVPFMDSEAESENPPRAGPGSSPLFSLLPGYRGHPSFQSLVSKLRSQVMSMARPQLSHTILTEKNWFHYAARIWDGVRKSSALAEYSRLLA.

3 disordered regions span residues 1 to 94 (MSES…PAPL), 108 to 143 (KGPVAVTGASTPEGTAPPPPAAPAPPKGEKEGQRPT), and 341 to 360 (KPSTPSPSHESSSSSGSDEG). Position 2 is an N-acetylserine (S2). 5 positions are modified to phosphoserine: S2, S4, S7, S32, and S53. Residues 36 to 53 (GRERDYIAPWERERRDAS) are compositionally biased toward basic and acidic residues. Pro residues-rich tracts occupy residues 78–94 (QPPPPTAPAAPPAPAPL) and 122–133 (TAPPPPAAPAPP). The span at 342–357 (PSTPSPSHESSSSSGS) shows a compositional bias: low complexity. At S451 the chain carries Phosphoserine.

The protein belongs to the SMG9 family. In terms of assembly, self-associates to form homodimers and forms heterodimers with SMG8; these assembly forms may represent SMG1C intermediate forms. Component of the SMG1C complex composed of SMG1, SMG8 and SMG9. Interacts with DHX34; the interaction is RNA-independent. Post-translationally, phosphorylated by SMG1.

Involved in nonsense-mediated decay (NMD) of mRNAs containing premature stop codons. Is recruited by release factors to stalled ribosomes together with SMG1 and SMG8 (forming the SMG1C protein kinase complex) and, in the SMG1C complex, is required for the efficient association between SMG1 and SMG8. Plays a role in brain, heart, and eye development. The protein is Nonsense-mediated mRNA decay factor SMG9 of Homo sapiens (Human).